A 522-amino-acid chain; its full sequence is Transactivator/viroplasmin protein (522 aa).

Positions 111-126 are enriched in polar residues; the sequence is QGIQIPQKSEPNSSVA. Disordered regions lie at residues 111 to 133 and 491 to 522; these read QGIQIPQKSEPNSSVAPNRAESG and SADSKVADKEGPPLTTNVEKEDVSTTSSKASG.

The protein belongs to the caulimoviridae viroplasmin family.

Its subcellular location is the host cytoplasm. Enhances the ribosomal termination-reinitiation event leading to the translation of major open reading frames on the polycistronic viral RNAs. The polypeptide is Transactivator/viroplasmin protein (Arabidopsis thaliana (Mouse-ear cress)).